Here is a 376-residue protein sequence, read N- to C-terminus: Chaperone protein DnaJ (376 aa).

A J domain is found at 5-70 (DYYEILGVSK…QKRAAYDQYG (66 aa)). A CR-type zinc finger spans residues 131-209 (GVTKEIRIPT…CHGHGRVERS (79 aa)). The Zn(2+) site is built by C144, C147, C161, C164, C183, C186, C197, and C200. CXXCXGXG motif repeat units lie at residues 144–151 (CDVCHGSG), 161–168 (CPTCHGSG), 183–190 (CPHCQGRG), and 197–204 (CNKCHGHG).

It belongs to the DnaJ family. As to quaternary structure, homodimer. Requires Zn(2+) as cofactor.

The protein localises to the cytoplasm. Participates actively in the response to hyperosmotic and heat shock by preventing the aggregation of stress-denatured proteins and by disaggregating proteins, also in an autonomous, DnaK-independent fashion. Unfolded proteins bind initially to DnaJ; upon interaction with the DnaJ-bound protein, DnaK hydrolyzes its bound ATP, resulting in the formation of a stable complex. GrpE releases ADP from DnaK; ATP binding to DnaK triggers the release of the substrate protein, thus completing the reaction cycle. Several rounds of ATP-dependent interactions between DnaJ, DnaK and GrpE are required for fully efficient folding. Also involved, together with DnaK and GrpE, in the DNA replication of plasmids through activation of initiation proteins. This is Chaperone protein DnaJ from Escherichia coli (strain K12 / MC4100 / BW2952).